Reading from the N-terminus, the 530-residue chain is Phosphoenolpyruvate carboxykinase (ATP) (530 aa).

Arg-58, Tyr-195, and Lys-201 together coordinate substrate. Residues Lys-201, His-220, and 236 to 244 (GLSGTGKTT) each bind ATP. The Mn(2+) site is built by Lys-201 and His-220. Residue Asp-257 participates in Mn(2+) binding. Residues Glu-285, Arg-321, 440–441 (RI), and Thr-446 contribute to the ATP site. Arg-321 is a binding site for substrate.

Belongs to the phosphoenolpyruvate carboxykinase (ATP) family. The cofactor is Mn(2+).

The protein localises to the cytoplasm. It catalyses the reaction oxaloacetate + ATP = phosphoenolpyruvate + ADP + CO2. It participates in carbohydrate biosynthesis; gluconeogenesis. Involved in the gluconeogenesis. Catalyzes the conversion of oxaloacetate (OAA) to phosphoenolpyruvate (PEP) through direct phosphoryl transfer between the nucleoside triphosphate and OAA. This Staphylococcus epidermidis (strain ATCC 35984 / DSM 28319 / BCRC 17069 / CCUG 31568 / BM 3577 / RP62A) protein is Phosphoenolpyruvate carboxykinase (ATP).